The primary structure comprises 104 residues: Pterin-4-alpha-carbinolamine dehydratase (104 aa).

At Ala-2 the chain carries N-acetylalanine. Substrate-binding positions include 61-63 (DHH) and 78-81 (STHE).

Belongs to the pterin-4-alpha-carbinolamine dehydratase family. As to quaternary structure, homotetramer and homodimer. As to expression, the major tissues expressing cDcoH are hypothalamus, kidney and liver.

It localises to the cytoplasm. The protein localises to the nucleus. The enzyme catalyses (4aS,6R)-4a-hydroxy-L-erythro-5,6,7,8-tetrahydrobiopterin = (6R)-L-erythro-6,7-dihydrobiopterin + H2O. In terms of biological role, involved in tetrahydrobiopterin biosynthesis. Seems to both prevent the formation of 7-pterins and accelerate the formation of quinonoid-BH2. Coactivator for HNF1A-dependent transcription. Regulates the dimerization of homeodomain protein HNF1A and enhances its transcriptional activity. Also acts as a coactivator for HNF1B-dependent transcription. In Gallus gallus (Chicken), this protein is Pterin-4-alpha-carbinolamine dehydratase (PCBD1).